The primary structure comprises 262 residues: Homeobox protein Nkx-6.3 (262 aa).

The homeobox DNA-binding region spans Lys-140–Ser-199. Positions Lys-197–Asp-237 are disordered.

As to expression, expressed in the developing CNS and gastro-intestinal tract.

It is found in the nucleus. Putative transcription factor, which may be involved in patterning of central nervous system and pancreas. In Mus musculus (Mouse), this protein is Homeobox protein Nkx-6.3 (Nkx6-3).